A 251-amino-acid chain; its full sequence is Phosphate import ATP-binding protein PstB (251 aa).

An ABC transporter domain is found at 5 to 246 (FDIRNFSVYY…PEKELTEKYL (242 aa)). 37 to 44 (GPSGCGKS) is an ATP binding site.

The protein belongs to the ABC transporter superfamily. Phosphate importer (TC 3.A.1.7) family. As to quaternary structure, the complex is composed of two ATP-binding proteins (PstB), two transmembrane proteins (PstC and PstA) and a solute-binding protein (PstS).

It localises to the cell membrane. It catalyses the reaction phosphate(out) + ATP + H2O = ADP + 2 phosphate(in) + H(+). Its function is as follows. Part of the ABC transporter complex PstSACB involved in phosphate import. Responsible for energy coupling to the transport system. This chain is Phosphate import ATP-binding protein PstB, found in Archaeoglobus fulgidus (strain ATCC 49558 / DSM 4304 / JCM 9628 / NBRC 100126 / VC-16).